Here is a 74-residue protein sequence, read N- to C-terminus: Ubiquitin-like protein FUBI (74 aa).

It belongs to the ubiquitin family.

Its function is as follows. Confers arsenite resistance. The protein is Ubiquitin-like protein FUBI (FAU) of Cricetulus griseus (Chinese hamster).